The primary structure comprises 267 residues: 2-keto-3-deoxy-L-rhamnonate aldolase (267 aa).

His49 serves as the catalytic Proton acceptor. Gln151 provides a ligand contact to substrate. Mg(2+) is bound at residue Glu153. The substrate site is built by Ala178 and Asp179. Asp179 lines the Mg(2+) pocket.

It belongs to the HpcH/HpaI aldolase family. KDR aldolase subfamily. As to quaternary structure, homohexamer. It depends on Mg(2+) as a cofactor.

The catalysed reaction is 2-dehydro-3-deoxy-L-rhamnonate = (S)-lactaldehyde + pyruvate. In terms of biological role, catalyzes the reversible retro-aldol cleavage of 2-keto-3-deoxy-L-rhamnonate (KDR) to pyruvate and lactaldehyde. In Klebsiella pneumoniae subsp. pneumoniae (strain ATCC 700721 / MGH 78578), this protein is 2-keto-3-deoxy-L-rhamnonate aldolase.